A 431-amino-acid polypeptide reads, in one-letter code: Histidine--tRNA ligase (431 aa).

The protein belongs to the class-II aminoacyl-tRNA synthetase family. As to quaternary structure, homodimer.

The protein localises to the cytoplasm. It carries out the reaction tRNA(His) + L-histidine + ATP = L-histidyl-tRNA(His) + AMP + diphosphate + H(+). The sequence is that of Histidine--tRNA ligase from Neisseria gonorrhoeae (strain ATCC 700825 / FA 1090).